The chain runs to 579 residues: 2-isopropylmalate synthase (579 aa).

One can recognise a Pyruvate carboxyltransferase domain in the interval 40–314 (PRWCAVDLRD…DPMIDFSDID (275 aa)). Mg(2+)-binding residues include Asp49, His253, His255, and Asn289. Residues 456-579 (SDEEQAQWGR…VNRAVRDAQA (124 aa)) form a regulatory domain region.

The protein belongs to the alpha-IPM synthase/homocitrate synthase family. LeuA type 2 subfamily. Homodimer. The cofactor is Mg(2+).

It localises to the cytoplasm. It carries out the reaction 3-methyl-2-oxobutanoate + acetyl-CoA + H2O = (2S)-2-isopropylmalate + CoA + H(+). It participates in amino-acid biosynthesis; L-leucine biosynthesis; L-leucine from 3-methyl-2-oxobutanoate: step 1/4. Catalyzes the condensation of the acetyl group of acetyl-CoA with 3-methyl-2-oxobutanoate (2-ketoisovalerate) to form 3-carboxy-3-hydroxy-4-methylpentanoate (2-isopropylmalate). In Paenarthrobacter aurescens (strain TC1), this protein is 2-isopropylmalate synthase.